A 306-amino-acid chain; its full sequence is Dihydroorotate dehydrogenase B (NAD(+)), catalytic subunit (306 aa).

FMN contacts are provided by residues S24 and 48–49; that span reads KA. Residues K48 and 72 to 76 contribute to the substrate site; that span reads NAIGL. FMN is bound by residues N102 and N130. A substrate-binding site is contributed by N130. C133 acts as the Nucleophile in catalysis. K168 and I194 together coordinate FMN. 195 to 196 is a binding site for substrate; that stretch reads NT. FMN-binding positions include G220, 246–247, and 268–269; these read GG and GT.

Belongs to the dihydroorotate dehydrogenase family. Type 1 subfamily. As to quaternary structure, heterotetramer of 2 PyrK and 2 PyrD type B subunits. FMN is required as a cofactor.

The protein resides in the cytoplasm. It catalyses the reaction (S)-dihydroorotate + NAD(+) = orotate + NADH + H(+). It participates in pyrimidine metabolism; UMP biosynthesis via de novo pathway; orotate from (S)-dihydroorotate (NAD(+) route): step 1/1. In terms of biological role, catalyzes the conversion of dihydroorotate to orotate with NAD(+) as electron acceptor. This Malacoplasma penetrans (strain HF-2) (Mycoplasma penetrans) protein is Dihydroorotate dehydrogenase B (NAD(+)), catalytic subunit (pyrD).